A 125-amino-acid polypeptide reads, in one-letter code: MVSPLPLNKRQQGQVYEVMAEQYLQRHHLKPVERNFTCRSGEIDLIMRDKSCVVFVEVKFRKQNHFGSAAEAVNWRKQQKLKRAALLWLKKNSLSTEHTEFRFDVVAIQGPDQQIEWFTNTLVEG.

This sequence belongs to the UPF0102 family.

The sequence is that of UPF0102 protein PBPRA3228 from Photobacterium profundum (strain SS9).